A 172-amino-acid polypeptide reads, in one-letter code: RNA silencing suppressor p19 (172 aa).

Over residues 1–20 the composition is skewed to basic and acidic residues; sequence MERAIQGNDAREQANSERWD. Residues 1–38 form a disordered region; sequence MERAIQGNDAREQANSERWDGGSGSSTSPFQLPDESPS.

It belongs to the tombusvirus protein p19 family. In terms of assembly, homodimer.

Its function is as follows. Viral suppressor of RNA silencing which binds specifically to silencing RNAs (siRNAs). Acts as a molecular caliper to specifically select siRNAs based on the length of the duplex region of the RNA. In Tomato bushy stunt virus (strain type) (TBSV), this protein is RNA silencing suppressor p19.